The sequence spans 377 residues: Flap endonuclease 1 (377 aa).

Residues 1–104 (MGIQGLAKLL…GELAKRTERR (104 aa)) form an N-domain region. D34 is a binding site for Mg(2+). Residues R47 and R70 each contribute to the DNA site. Residues D86, E158, E160, D179, and D181 each contribute to the Mg(2+) site. The tract at residues 122 to 253 (NIDKFSRRLV…KRSVDLIRQH (132 aa)) is I-domain. E158 contributes to the DNA binding site. Residues G231 and D233 each coordinate DNA. D233 contributes to the Mg(2+) binding site. The interval 336–344 (TQGRLDSFF) is interaction with PCNA. The disordered stretch occupies residues 337-377 (QGRLDSFFKVLPSPANKRKLQDGKGSQNKKAKTGGKFKRPK). Basic residues predominate over residues 363 to 377 (QNKKAKTGGKFKRPK).

Belongs to the XPG/RAD2 endonuclease family. FEN1 subfamily. In terms of assembly, interacts with PCNA. Three molecules of FEN1 bind to one PCNA trimer with each molecule binding to one PCNA monomer. PCNA stimulates the nuclease activity without altering cleavage specificity. Mg(2+) serves as cofactor. Phosphorylated. Phosphorylation upon DNA damage induces relocalization to the nuclear plasma.

The protein localises to the nucleus. It is found in the nucleolus. It localises to the nucleoplasm. Its subcellular location is the mitochondrion. Structure-specific nuclease with 5'-flap endonuclease and 5'-3' exonuclease activities involved in DNA replication and repair. During DNA replication, cleaves the 5'-overhanging flap structure that is generated by displacement synthesis when DNA polymerase encounters the 5'-end of a downstream Okazaki fragment. It enters the flap from the 5'-end and then tracks to cleave the flap base, leaving a nick for ligation. Also involved in the long patch base excision repair (LP-BER) pathway, by cleaving within the apurinic/apyrimidinic (AP) site-terminated flap. Acts as a genome stabilization factor that prevents flaps from equilibrating into structures that lead to duplications and deletions. Also possesses 5'-3' exonuclease activity on nicked or gapped double-stranded DNA, and exhibits RNase H activity. Also involved in replication and repair of rDNA and in repairing mitochondrial DNA. The chain is Flap endonuclease 1 from Nematostella vectensis (Starlet sea anemone).